The following is a 157-amino-acid chain: SsrA-binding protein (157 aa).

The protein belongs to the SmpB family.

Its subcellular location is the cytoplasm. In terms of biological role, required for rescue of stalled ribosomes mediated by trans-translation. Binds to transfer-messenger RNA (tmRNA), required for stable association of tmRNA with ribosomes. tmRNA and SmpB together mimic tRNA shape, replacing the anticodon stem-loop with SmpB. tmRNA is encoded by the ssrA gene; the 2 termini fold to resemble tRNA(Ala) and it encodes a 'tag peptide', a short internal open reading frame. During trans-translation Ala-aminoacylated tmRNA acts like a tRNA, entering the A-site of stalled ribosomes, displacing the stalled mRNA. The ribosome then switches to translate the ORF on the tmRNA; the nascent peptide is terminated with the 'tag peptide' encoded by the tmRNA and targeted for degradation. The ribosome is freed to recommence translation, which seems to be the essential function of trans-translation. The polypeptide is SsrA-binding protein (Aquifex aeolicus (strain VF5)).